The following is a 70-amino-acid chain: Conotoxin Cl6.13 (70 aa).

A signal peptide spans 1–21; sequence MKFPLLFISLALAAFLTRVQD. A propeptide spanning residues 22 to 33 is cleaved from the precursor; that stretch reads ADSSVISKEKSV. Cystine bridges form between Cys-41–Cys-58, Cys-48–Cys-63, and Cys-57–Cys-68.

In terms of tissue distribution, expressed by the venom duct.

Its subcellular location is the secreted. The sequence is that of Conotoxin Cl6.13 from Californiconus californicus (California cone).